Consider the following 159-residue polypeptide: MAGHTDNEITIAAPMELVWNMTNDIEKWPGLFSEYASVEVLGRDDDKVTFRLTMHPDADGKVWSWVSERVADPVTRTVRAQRVETGPFQYMNIVWEYAETAEGTVMRWTQDFAMKPDAPVDDAWMTDNINRNSRTQMALIRDRIEQAAGERRTASVLAD.

The protein to polyketide cyclases.

In terms of biological role, involved in developmentally regulated synthesis of a compound biosynthetically related to polyketide antibiotics which is essential for spore color in Streptomyces coelicolor. The sequence is that of Putative polyketide cyclase from Streptomyces coelicolor (strain ATCC BAA-471 / A3(2) / M145).